The primary structure comprises 448 residues: Trigger factor (448 aa).

The PPIase FKBP-type domain maps to 162 to 243 (GDFVQIDLNA…VRTVKEKELP (82 aa)).

Belongs to the FKBP-type PPIase family. Tig subfamily.

Its subcellular location is the cytoplasm. The catalysed reaction is [protein]-peptidylproline (omega=180) = [protein]-peptidylproline (omega=0). Its function is as follows. Involved in protein export. Acts as a chaperone by maintaining the newly synthesized protein in an open conformation. Functions as a peptidyl-prolyl cis-trans isomerase. The protein is Trigger factor of Salinispora arenicola (strain CNS-205).